The primary structure comprises 178 residues: Interleukin-10 (178 aa).

The N-terminal stretch at 1-18 (MPNPVLLYCLVLLAGMGT) is a signal peptide. 2 cysteine pairs are disulfide-bonded: C30–C126 and C80–C132. The N-linked (GlcNAc...) asparagine glycan is linked to N134.

It belongs to the IL-10 family. In terms of assembly, homodimer. Interacts with IL10RA and IL10RB.

The protein localises to the secreted. In terms of biological role, major immune regulatory cytokine that acts on many cells of the immune system where it has profound anti-inflammatory functions, limiting excessive tissue disruption caused by inflammation. Mechanistically, IL10 binds to its heterotetrameric receptor comprising IL10RA and IL10RB leading to JAK1 and STAT2-mediated phosphorylation of STAT3. In turn, STAT3 translocates to the nucleus where it drives expression of anti-inflammatory mediators. Targets antigen-presenting cells (APCs) such as macrophages and monocytes and inhibits their release of pro-inflammatory cytokines including granulocyte-macrophage colony-stimulating factor /GM-CSF, granulocyte colony-stimulating factor/G-CSF, IL-1 alpha, IL-1 beta, IL-6, IL-8 and TNF-alpha. Also interferes with antigen presentation by reducing the expression of MHC-class II and co-stimulatory molecules, thereby inhibiting their ability to induce T cell activation. In addition, controls the inflammatory response of macrophages by reprogramming essential metabolic pathways including mTOR signaling. In Marmota monax (Woodchuck), this protein is Interleukin-10 (IL10).